We begin with the raw amino-acid sequence, 336 residues long: MFLTLIAAIISFMVSAFTMPYFIKFYQLKKIGGQQMHEDVKQHLAKAGTPTMGGTVFLLVATAVSLLVSLFSIKNTQSLALISGILSIVVIYGIIGFLDDFLKIFKQINEGLTAKQKLALQLAGGLMFYFLHVSPSGISSINVFGYQLSLGIFYLFFVLFWVVGFSNAVNLTDGIDGLASISVVISLVTYGVIAYVQWQFDVLLLIGTMIGALLGFFCFNHKPAKVFMGDVGSLALGAMLAAISIALRQEWTLLIIGIVYVLETSSVMLQVFYFKYTKKKYGEGRRIFRMTPFHHHLELGGLSGKGKKWSEWQVDAFLWGVGSLASLLVLAILYVF.

The next 10 helical transmembrane spans lie at 3 to 23 (LTLI…PYFI), 53 to 73 (GGTV…LFSI), 78 to 98 (SLAL…IGFL), 118 to 138 (LALQ…PSGI), 143 to 163 (VFGY…FWVV), 174 to 194 (GIDG…GVIA), 200 to 220 (FDVL…FCFN), 226 to 246 (VFMG…ISIA), 254 to 274 (LIIG…VFYF), and 316 to 336 (AFLW…LYVF).

Belongs to the glycosyltransferase 4 family. MraY subfamily. It depends on Mg(2+) as a cofactor.

It localises to the cell membrane. The enzyme catalyses UDP-N-acetyl-alpha-D-muramoyl-L-alanyl-gamma-D-glutamyl-L-lysyl-D-alanyl-D-alanine + di-trans,octa-cis-undecaprenyl phosphate = Mur2Ac(oyl-L-Ala-gamma-D-Glu-L-Lys-D-Ala-D-Ala)-di-trans,octa-cis-undecaprenyl diphosphate + UMP. It functions in the pathway cell wall biogenesis; peptidoglycan biosynthesis. Its function is as follows. Catalyzes the initial step of the lipid cycle reactions in the biosynthesis of the cell wall peptidoglycan: transfers peptidoglycan precursor phospho-MurNAc-pentapeptide from UDP-MurNAc-pentapeptide onto the lipid carrier undecaprenyl phosphate, yielding undecaprenyl-pyrophosphoryl-MurNAc-pentapeptide, known as lipid I. This chain is Phospho-N-acetylmuramoyl-pentapeptide-transferase, found in Streptococcus pyogenes serotype M18 (strain MGAS8232).